The following is a 43-amino-acid chain: Snaclec lebecetin subunit beta (43 aa).

A C-type lectin domain is found at 1–43 (ALNCASGWSGGYDQHCYKVFDIPPSWAADEKFCKQQTSGGHLV). C4 and C16 are oxidised to a cystine.

In terms of assembly, heterodimer of subunits alpha and beta; disulfide-linked. Requires Ca(2+) as cofactor. Post-translationally, glycosylated. In terms of tissue distribution, expressed by the venom gland.

It localises to the secreted. Binds to the platelet GPIb/IX/V receptor system and inhibits ristocetin-induced platelet aggregation in human platelet-rich plasma. Strongly inhibits platelet aggregation induced by ADP, calcium ionophore, thrombin and collagen. Does not inhibit U46619-induced platelet aggregation. In Macrovipera lebetinus (Levantine viper), this protein is Snaclec lebecetin subunit beta.